A 92-amino-acid polypeptide reads, in one-letter code: YcgL domain-containing protein HS_0805 (92 aa).

Positions 1–85 (MLCAIYKTKR…QQENLLEQER (85 aa)) constitute a YcgL domain.

This chain is YcgL domain-containing protein HS_0805, found in Histophilus somni (strain 129Pt) (Haemophilus somnus).